Reading from the N-terminus, the 56-residue chain is Large ribosomal subunit protein bL32 (56 aa).

The interval 1-26 (MAVQQNKKSRSKRGMRRSHDALSTAQ) is disordered. Over residues 7 to 16 (KKSRSKRGMR) the composition is skewed to basic residues.

It belongs to the bacterial ribosomal protein bL32 family.

This is Large ribosomal subunit protein bL32 from Shewanella denitrificans (strain OS217 / ATCC BAA-1090 / DSM 15013).